The primary structure comprises 409 residues: Tryptophan synthase beta chain (409 aa).

An N6-(pyridoxal phosphate)lysine modification is found at K95.

Belongs to the TrpB family. As to quaternary structure, tetramer of two alpha and two beta chains. Pyridoxal 5'-phosphate is required as a cofactor.

It catalyses the reaction (1S,2R)-1-C-(indol-3-yl)glycerol 3-phosphate + L-serine = D-glyceraldehyde 3-phosphate + L-tryptophan + H2O. Its pathway is amino-acid biosynthesis; L-tryptophan biosynthesis; L-tryptophan from chorismate: step 5/5. Its function is as follows. The beta subunit is responsible for the synthesis of L-tryptophan from indole and L-serine. The chain is Tryptophan synthase beta chain from Pseudomonas syringae pv. syringae (strain B728a).